We begin with the raw amino-acid sequence, 96 residues long: Integration host factor subunit alpha (96 aa).

This sequence belongs to the bacterial histone-like protein family. Heterodimer of an alpha and a beta chain.

In terms of biological role, this protein is one of the two subunits of integration host factor, a specific DNA-binding protein that functions in genetic recombination as well as in transcriptional and translational control. This chain is Integration host factor subunit alpha, found in Haemophilus influenzae (strain 86-028NP).